A 407-amino-acid chain; its full sequence is Tryptophan synthase beta chain (407 aa).

N6-(pyridoxal phosphate)lysine is present on Lys-98.

This sequence belongs to the TrpB family. Tetramer of two alpha and two beta chains. It depends on pyridoxal 5'-phosphate as a cofactor.

It catalyses the reaction (1S,2R)-1-C-(indol-3-yl)glycerol 3-phosphate + L-serine = D-glyceraldehyde 3-phosphate + L-tryptophan + H2O. The protein operates within amino-acid biosynthesis; L-tryptophan biosynthesis; L-tryptophan from chorismate: step 5/5. Functionally, the beta subunit is responsible for the synthesis of L-tryptophan from indole and L-serine. This chain is Tryptophan synthase beta chain, found in Bradyrhizobium sp. (strain ORS 278).